Reading from the N-terminus, the 53-residue chain is Lantibiotic mutacin-2 (53 aa).

Residues 1-26 (MNKLNSNAVVSLNEVSDSELDTILGG) constitute a propeptide that is removed on maturation. Positions 36 to 41 (TVSYEC) form a cross-link, beta-methyllanthionine (Thr-Cys). 2 consecutive cross-links (lanthionine (Ser-Cys)) follow at residues 38–52 (SYEC…VFTC) and 45–53 (SWQHVFTCC). T51 is modified (2,3-didehydrobutyrine).

Maturation of lantibiotics involves the enzymatic conversion of Thr, and Ser into dehydrated AA and the formation of thioether bonds with cysteine. This is followed by membrane translocation and cleavage of the modified precursor. Post-translationally, it is not established whether the 2,3-didehydrobutyrine is the E- or Z-isomer.

Functionally, lanthionine-containing peptide antibiotic (lantibiotic) active on Gram-positive bacteria including M.luteus, S.aureus, Streptococcus, P.micros, P.acidilactici, C.sporogenes, C.diphtheriae, A.viscosus, G.vaginalis, P.acnes, L.monocytogenes and M.smegmatis, and Gram-negative bacteria including C.jejuni, H.pylori and N.gonorrhoeae. Transiently and partially depolarizes the transmembrane electrical potential and pH gradient of susceptible cells, inhibits the uptake of amino acids and depletes the intracellular ATP pool. This Streptococcus mutans protein is Lantibiotic mutacin-2.